The following is a 98-amino-acid chain: VQ motif-containing protein 1 (98 aa).

A VQ motif is present at residues 27 to 36; sequence FKTIVQELTG.

In terms of assembly, interacts with WRKY33.

Its subcellular location is the nucleus. In terms of biological role, may modulate WRKY transcription factor activities. This is VQ motif-containing protein 1 from Arabidopsis thaliana (Mouse-ear cress).